The primary structure comprises 97 residues: Co-chaperonin GroES (97 aa).

Belongs to the GroES chaperonin family. In terms of assembly, heptamer of 7 subunits arranged in a ring. Interacts with the chaperonin GroEL.

It localises to the cytoplasm. Functionally, together with the chaperonin GroEL, plays an essential role in assisting protein folding. The GroEL-GroES system forms a nano-cage that allows encapsulation of the non-native substrate proteins and provides a physical environment optimized to promote and accelerate protein folding. GroES binds to the apical surface of the GroEL ring, thereby capping the opening of the GroEL channel. The protein is Co-chaperonin GroES of Azotobacter vinelandii (strain DJ / ATCC BAA-1303).